Here is a 670-residue protein sequence, read N- to C-terminus: DEAD-box ATP-dependent RNA helicase 16 (670 aa).

The span at M1–M10 shows a compositional bias: low complexity. The disordered stretch occupies residues M1–L97. Composition is skewed to basic and acidic residues over residues A18–A30 and N40–E49. A Q motif motif is present at residues V92–R120. The Helicase ATP-binding domain occupies I123–L306. ATP is bound at residue A136–T143. Residues D254 to D257 carry the DEAD box motif. A Helicase C-terminal domain is found at L340–V523. The segment at D616–S670 is disordered. The segment covering K654–S670 has biased composition (basic and acidic residues).

Belongs to the DEAD box helicase family. DDX56/DBP9 subfamily.

It catalyses the reaction ATP + H2O = ADP + phosphate + H(+). The chain is DEAD-box ATP-dependent RNA helicase 16 from Oryza sativa subsp. japonica (Rice).